The primary structure comprises 591 residues: MVNVTVDPLTRIEGHQRISTEVDANGVITDAQSSSLIFRGFERILQHQDPRDAAFLTQRICGVCPLSHGLTATNALDELYGVAEHVPKDALVMRNIFQGLNMVASHATHIYVLFGPDLANPAYKKVLTPLGDTGSAVWDEMLGRFAPISYKMDGAAIPAGSSYMAAIPEKKRLQEMIALIAGRMPGPSSLYPGGYTYPATVADITKLSTYYLQVMDFVSAHTLKVDFNTWIENTYKASSPTKAVNFVTEHLTDLINKSTSSNDFSKEAGWGDVEFYAAFGSELVGEKLLGLPASLKHDTIGGYQDPSKICFVAYGGYYKPTDGYDPRSPAGDRIFTSGVVSGNLEYLKFDPDKITESTAHSFYQNSVNDLPPVKGETVPFTDPEKIVYTGGSDSQYSWDKAPRYDGIAGEVGPLARMLNIKEPLVTGLALALAENGYSPANVYTRMLARMQETAILAYELLNWVTVDYEPGGKISVPLDFNAAKDSQGMGLWEAPRGALGHWISTNGSGKVANYQCIVPGSWLMSPRDSNGIPGPLEQSLIGSKINPVGEVDYTNPVGIFHMGRSYDPCISCAVHTIDLTGKCAPNTLRIL.

Glu-42 provides a ligand contact to Mg(2+). Positions 61, 64, 569, and 572 each coordinate Ni(2+). Residue Cys-64 coordinates Fe cation. Cys-572 is a Fe cation binding site. Residue His-575 participates in Mg(2+) binding.

Belongs to the [NiFe]/[NiFeSe] hydrogenase large subunit family. In terms of assembly, composed of a large subunit (VhtA), a small subunit (VhtG) and a cytochrome subunit (VhtC). Requires Ni(2+) as cofactor. Fe cation serves as cofactor.

It is found in the cell membrane. It catalyses the reaction methanophenazine + H2 = dihydromethanophenazine. Functionally, part of the F420 non-reducing hydrogenase II complex that catalyzes the reduction of methanophenazine to dihydromethanophenazine. This is F420 non-reducing hydrogenase II large subunit from Methanosarcina mazei (strain ATCC BAA-159 / DSM 3647 / Goe1 / Go1 / JCM 11833 / OCM 88) (Methanosarcina frisia).